A 650-amino-acid polypeptide reads, in one-letter code: MASSHSLLFSSSFLSKPSSFTSSLRRFVYLPTRQFWPRQRHGFSTVFAVATEPAISSSGPKKAEPSTVVLPSNESSDKLLKIRHTCAHVMAMAVQKLFPDAKVTIGPWIDNGFYYDFDMEPLTDKDLKRIKKEMDRIISRNLPLLREEVSREEAKKRIMAINEPYKMEILDGIKEEPITVYHIGNEWWDLCAGPHVETTGKINKKAVELESVAGAYWRGDEKRQMLQRIYGTAWESEEQLKAYLHFKEEAKRRDHRRIGQDLDLFSIQDEAGGGLVFWHPKGAIVRNIIEESWKKMHVEHGYDLIYTPHVAKADLWKISGHLDFYRENMYDQMEIEDELYQLRPMNCPYHILLYQRKRQSYRDLPIRVAELGTVYRYELSGSLHGLFRVRGFTQDDAHIFCLEDQIKDEIRGVLDLTEEILSRFGFNKYEVNLSTRPEKSVGGDDIWEKATCALRDALDDKGWSYEVDEGGGAFYGPKIDLKIEDALGRKWQCSTIQVDFNLPQRFDITYVDTNSDKKRPIMIHRAVLGSLERFFGVLIEHYAGDFPLWLSPVQVRVLPVTDNQLEFCKEVSKKLRACGVRAELCHGERLPKLIRNAETQKIPLMAVVGPKEVETGTVTVRSRFGGELGTIPVDDLINKINIAVETRTAL.

Positions 347, 398, and 524 each coordinate Zn(2+).

The protein belongs to the class-II aminoacyl-tRNA synthetase family.

It localises to the plastid. It is found in the chloroplast. Its subcellular location is the mitochondrion. The catalysed reaction is tRNA(Thr) + L-threonine + ATP = L-threonyl-tRNA(Thr) + AMP + diphosphate + H(+). The protein is Threonine--tRNA ligase, chloroplastic/mitochondrial 2 of Arabidopsis thaliana (Mouse-ear cress).